A 243-amino-acid chain; its full sequence is UPF0246 protein M28_Spy1772 (243 aa).

Belongs to the UPF0246 family.

This is UPF0246 protein M28_Spy1772 from Streptococcus pyogenes serotype M28 (strain MGAS6180).